The chain runs to 332 residues: Ketol-acid reductoisomerase (NADP(+)) (332 aa).

The KARI N-terminal Rossmann domain occupies Ala2–Thr182. NADP(+)-binding positions include Tyr25–Gln28, Arg48, Ser53, and Asp83–Gln86. His108 is an active-site residue. Gly134 provides a ligand contact to NADP(+). The 146-residue stretch at Thr183 to Leu328 folds into the KARI C-terminal knotted domain. Mg(2+) is bound by residues Asp191, Glu195, Glu227, and Glu231. Position 252 (Ser252) interacts with substrate.

The protein belongs to the ketol-acid reductoisomerase family. Mg(2+) serves as cofactor.

It carries out the reaction (2R)-2,3-dihydroxy-3-methylbutanoate + NADP(+) = (2S)-2-acetolactate + NADPH + H(+). It catalyses the reaction (2R,3R)-2,3-dihydroxy-3-methylpentanoate + NADP(+) = (S)-2-ethyl-2-hydroxy-3-oxobutanoate + NADPH + H(+). Its pathway is amino-acid biosynthesis; L-isoleucine biosynthesis; L-isoleucine from 2-oxobutanoate: step 2/4. It functions in the pathway amino-acid biosynthesis; L-valine biosynthesis; L-valine from pyruvate: step 2/4. Involved in the biosynthesis of branched-chain amino acids (BCAA). Catalyzes an alkyl-migration followed by a ketol-acid reduction of (S)-2-acetolactate (S2AL) to yield (R)-2,3-dihydroxy-isovalerate. In the isomerase reaction, S2AL is rearranged via a Mg-dependent methyl migration to produce 3-hydroxy-3-methyl-2-ketobutyrate (HMKB). In the reductase reaction, this 2-ketoacid undergoes a metal-dependent reduction by NADPH to yield (R)-2,3-dihydroxy-isovalerate. In Dictyoglomus thermophilum (strain ATCC 35947 / DSM 3960 / H-6-12), this protein is Ketol-acid reductoisomerase (NADP(+)).